The chain runs to 366 residues: Adenosine deaminase (366 aa).

Residues His19 and His21 each contribute to the Zn(2+) site. Positions 21, 23, and 181 each coordinate substrate. Residue His208 participates in Zn(2+) binding. Glu211 functions as the Proton donor in the catalytic mechanism. Asp304 provides a ligand contact to Zn(2+).

Belongs to the metallo-dependent hydrolases superfamily. Adenosine and AMP deaminases family. Adenosine deaminase subfamily. Zn(2+) is required as a cofactor.

The catalysed reaction is adenosine + H2O + H(+) = inosine + NH4(+). It catalyses the reaction 2'-deoxyadenosine + H2O + H(+) = 2'-deoxyinosine + NH4(+). Catalyzes the hydrolytic deamination of adenosine and 2-deoxyadenosine. This Mycobacterium avium (strain 104) protein is Adenosine deaminase.